Reading from the N-terminus, the 556-residue chain is 2-isopropylmalate synthase (556 aa).

The Pyruvate carboxyltransferase domain maps to 33-307 (PIWLSTDLRD…DPQLDFSDID (275 aa)). Mg(2+) is bound by residues Asp42, His246, His248, and Asn282. The segment at 439-556 (ASAPYALKGH…ALSQAESRAA (118 aa)) is regulatory domain.

The protein belongs to the alpha-IPM synthase/homocitrate synthase family. LeuA type 2 subfamily. Homodimer. Mg(2+) is required as a cofactor.

Its subcellular location is the cytoplasm. The enzyme catalyses 3-methyl-2-oxobutanoate + acetyl-CoA + H2O = (2S)-2-isopropylmalate + CoA + H(+). Its pathway is amino-acid biosynthesis; L-leucine biosynthesis; L-leucine from 3-methyl-2-oxobutanoate: step 1/4. Functionally, catalyzes the condensation of the acetyl group of acetyl-CoA with 3-methyl-2-oxobutanoate (2-ketoisovalerate) to form 3-carboxy-3-hydroxy-4-methylpentanoate (2-isopropylmalate). The polypeptide is 2-isopropylmalate synthase (Ectopseudomonas mendocina (strain ymp) (Pseudomonas mendocina)).